The sequence spans 203 residues: Glycerol-3-phosphate acyltransferase (203 aa).

5 helical membrane-spanning segments follow: residues 13-33 (TLAC…LILT), 62-82 (LAAA…AIAS), 88-108 (AGIA…WLSF), 118-138 (IGVL…IWLA), and 159-179 (IALY…MTAI).

Belongs to the PlsY family. As to quaternary structure, probably interacts with PlsX.

The protein resides in the cell inner membrane. The enzyme catalyses an acyl phosphate + sn-glycerol 3-phosphate = a 1-acyl-sn-glycero-3-phosphate + phosphate. The protein operates within lipid metabolism; phospholipid metabolism. Its function is as follows. Catalyzes the transfer of an acyl group from acyl-phosphate (acyl-PO(4)) to glycerol-3-phosphate (G3P) to form lysophosphatidic acid (LPA). This enzyme utilizes acyl-phosphate as fatty acyl donor, but not acyl-CoA or acyl-ACP. The sequence is that of Glycerol-3-phosphate acyltransferase from Rhizobium meliloti (strain 1021) (Ensifer meliloti).